Here is a 360-residue protein sequence, read N- to C-terminus: D-alanine--D-alanine ligase (360 aa).

In terms of domain architecture, ATP-grasp spans 149 to 353 (KKLMAAEGLP…YEELLDVLVQ (205 aa)). 176–231 (KNLLGLPVFVKPARGGSSIGISRVTAWEDFNKAVGLARAHDEKVIVESEIVGSEVE) serves as a coordination point for ATP. Residues Asp-308, Glu-320, and Asn-322 each coordinate Mg(2+).

The protein belongs to the D-alanine--D-alanine ligase family. Mg(2+) is required as a cofactor. Mn(2+) serves as cofactor.

It is found in the cytoplasm. The catalysed reaction is 2 D-alanine + ATP = D-alanyl-D-alanine + ADP + phosphate + H(+). The protein operates within cell wall biogenesis; peptidoglycan biosynthesis. Its function is as follows. Cell wall formation. This Corynebacterium glutamicum (strain ATCC 13032 / DSM 20300 / JCM 1318 / BCRC 11384 / CCUG 27702 / LMG 3730 / NBRC 12168 / NCIMB 10025 / NRRL B-2784 / 534) protein is D-alanine--D-alanine ligase.